We begin with the raw amino-acid sequence, 752 residues long: Xanthine dehydrogenase molybdenum-binding subunit (752 aa).

4 residues coordinate Mo-molybdopterin: Gln206, Phe237, Arg350, and Ala516.

The protein belongs to the xanthine dehydrogenase family. Heterotrimer of XdhA, XdhB and XdhC. It depends on Mo-molybdopterin as a cofactor.

The catalysed reaction is xanthine + NAD(+) + H2O = urate + NADH + H(+). It catalyses the reaction hypoxanthine + NAD(+) + H2O = xanthine + NADH + H(+). The protein operates within purine metabolism; hypoxanthine degradation; urate from hypoxanthine: step 1/2. It functions in the pathway purine metabolism; hypoxanthine degradation; urate from hypoxanthine: step 2/2. Presumed to be a dehydrogenase, but possibly an oxidase. Participates in limited purine salvage (requires aspartate) but does not support aerobic growth on purines as the sole carbon source (purine catabolism). In Escherichia coli O157:H7, this protein is Xanthine dehydrogenase molybdenum-binding subunit (xdhA).